A 387-amino-acid chain; its full sequence is MDAGLKRELEQKVRSGERLTREDGIALYESDDLAWLGGLAHEVRTRKNGDVVHFNVNRHLNMTNVCTASCAYCSFQRKPGEKDAYTMRIEEAVKLAKAMEGENLTELHIVNGLHPNLPWRYYPRSLRELKAALPEVSLKAFTATEIHHFETISGMSASDILDELIDAGLESLTGGGAEIFDWEVRQHIVDHRTHWEDWSRIHRLAHEKGLKTPCTMLYGHIEEPRHRVDHVLRLRELQDETGGFQVFIPLRYQHDFVDMKDGKVRNRLQARTQMATGAEALKTFAVSRLLFDNVPHVKVFWVMHGVQTAQLALQHGADDMDGSVVEYKITHDADDFGTPNKLTREDLLDLIRDAGFRPVERNTRYEILREYEGPDPARRESPQPMRV.

In terms of domain architecture, Radical SAM core spans 52–279 (VHFNVNRHLN…ARTQMATGAE (228 aa)). Cys-66, Cys-70, and Cys-73 together coordinate [4Fe-4S] cluster.

The protein belongs to the radical SAM superfamily. MqnE family. Requires [4Fe-4S] cluster as cofactor.

The enzyme catalyses 3-[(1-carboxyvinyl)-oxy]benzoate + S-adenosyl-L-methionine + H2O = 6-amino-6-deoxyfutalosine + hydrogencarbonate + L-methionine + H(+). Its pathway is quinol/quinone metabolism; menaquinone biosynthesis. Functionally, radical SAM enzyme that catalyzes the addition of the adenosyl radical to the double bond of 3-[(1-carboxyvinyl)oxy]benzoate, leading to aminodeoxyfutalosine (AFL), a key intermediate in the formation of menaquinone (MK, vitamin K2) from chorismate. This is Aminodeoxyfutalosine synthase from Streptomyces coelicolor (strain ATCC BAA-471 / A3(2) / M145).